Reading from the N-terminus, the 490-residue chain is Glutamate--tRNA ligase (490 aa).

Residues 15–25 (PSPTGYLHVGG) carry the 'HIGH' region motif. Residues 259 to 263 (KLSKR) carry the 'KMSKS' region motif. K262 is a binding site for ATP.

Belongs to the class-I aminoacyl-tRNA synthetase family. Glutamate--tRNA ligase type 1 subfamily. In terms of assembly, monomer.

The protein localises to the cytoplasm. It catalyses the reaction tRNA(Glu) + L-glutamate + ATP = L-glutamyl-tRNA(Glu) + AMP + diphosphate. In terms of biological role, catalyzes the attachment of glutamate to tRNA(Glu) in a two-step reaction: glutamate is first activated by ATP to form Glu-AMP and then transferred to the acceptor end of tRNA(Glu). The polypeptide is Glutamate--tRNA ligase (Bdellovibrio bacteriovorus (strain ATCC 15356 / DSM 50701 / NCIMB 9529 / HD100)).